Consider the following 70-residue polypeptide: Large ribosomal subunit protein bL31 (70 aa).

Zn(2+) is bound by residues C16, C18, C37, and C40.

Belongs to the bacterial ribosomal protein bL31 family. Type A subfamily. Part of the 50S ribosomal subunit. Zn(2+) is required as a cofactor.

In terms of biological role, binds the 23S rRNA. The sequence is that of Large ribosomal subunit protein bL31 from Glaesserella parasuis serovar 5 (strain SH0165) (Haemophilus parasuis).